A 695-amino-acid chain; its full sequence is Zinc finger SWIM domain-containing protein 3 (695 aa).

Residues 434–490 (NAPKLRRTRLPSTPPRPKKPFRICGGGDTRLPVEEVEETKADSAQSQLPQPQDQSSK) form a disordered region. The segment covering 475–489 (DSAQSQLPQPQDQSS) has biased composition (low complexity). The SWIM-type zinc-finger motif lies at 530–571 (VAVQLLENSHQVSKDGCSCSCSFQQCYHLPCRHILALLHTSQ).

The polypeptide is Zinc finger SWIM domain-containing protein 3 (Zswim3) (Mus musculus (Mouse)).